A 570-amino-acid chain; its full sequence is Endo-1,4-beta-xylanase 5-like (570 aa).

An N-terminal signal peptide occupies residues 1-23; that stretch reads MNSIKNGFFLCMIFLLWCHVDSG. N-linked (GlcNAc...) asparagine glycosylation is found at Asn-197, Asn-261, and Asn-307. The 300-residue stretch at 202–501 folds into the GH10 domain; sequence KGVVISLKQT…TQTGDVIDKL (300 aa). The active-site Proton donor is Glu-332. Residue Asn-346 is glycosylated (N-linked (GlcNAc...) asparagine). Glu-439 functions as the Nucleophile in the catalytic mechanism. N-linked (GlcNAc...) asparagine glycans are attached at residues Asn-490, Asn-515, Asn-537, and Asn-545.

The protein belongs to the glycosyl hydrolase 10 (cellulase F) family.

It catalyses the reaction Endohydrolysis of (1-&gt;4)-beta-D-xylosidic linkages in xylans.. Its pathway is glycan degradation; xylan degradation. In terms of biological role, binds to and hydrolyzes insoluble and soluble xylan substrates. The polypeptide is Endo-1,4-beta-xylanase 5-like (Arabidopsis thaliana (Mouse-ear cress)).